Reading from the N-terminus, the 220-residue chain is dTTP/UTP pyrophosphatase (220 aa).

Asp-83 acts as the Proton acceptor in catalysis.

It belongs to the Maf family. YhdE subfamily. Requires a divalent metal cation as cofactor.

It is found in the cytoplasm. It carries out the reaction dTTP + H2O = dTMP + diphosphate + H(+). The catalysed reaction is UTP + H2O = UMP + diphosphate + H(+). In terms of biological role, nucleoside triphosphate pyrophosphatase that hydrolyzes dTTP and UTP. May have a dual role in cell division arrest and in preventing the incorporation of modified nucleotides into cellular nucleic acids. In Syntrophotalea carbinolica (strain DSM 2380 / NBRC 103641 / GraBd1) (Pelobacter carbinolicus), this protein is dTTP/UTP pyrophosphatase.